Here is a 115-residue protein sequence, read N- to C-terminus: Large ribosomal subunit protein bL20 (115 aa).

It belongs to the bacterial ribosomal protein bL20 family.

Binds directly to 23S ribosomal RNA and is necessary for the in vitro assembly process of the 50S ribosomal subunit. It is not involved in the protein synthesizing functions of that subunit. The polypeptide is Large ribosomal subunit protein bL20 (Prochlorococcus marinus (strain MIT 9313)).